The primary structure comprises 2038 residues: Non-reducing polyketide synthase ZEA1 (2038 aa).

The tract at residues 9 to 246 (LLFGDQTDSW…NELNIHALQH (238 aa)) is N-terminal acylcarrier protein transacylase domain (SAT). Residues 364–794 (PGRIAIVGMA…GGNACILLED (431 aa)) form the Ketosynthase family 3 (KS3) domain. Active-site for beta-ketoacyl synthase activity residues include cysteine 537, histidine 672, and histidine 711. The tract at residues 888-1172 (VFVFTGQGSH…VCSSFVRATL (285 aa)) is malonyl-CoA:ACP transacylase (MAT) domain. Serine 979 functions as the For acyl/malonyl transferase activity in the catalytic mechanism. Positions 1221–1572 (SLLNLPTYAW…HFHEVENAVL (352 aa)) are product template (PT) domain. The interval 1254–1405 (HETFKANIST…GQLIQARWDK (152 aa)) is N-terminal hotdog fold. The 320-residue stretch at 1254–1573 (HETFKANIST…FHEVENAVLD (320 aa)) folds into the PKS/mFAS DH domain. The interval 1425-1573 (ISHRLQPQIL…FHEVENAVLD (149 aa)) is C-terminal hotdog fold. In terms of domain architecture, Carrier spans 1616-1693 (QSDAHVLDSI…DLRRVFAPKS (78 aa)). Serine 1653 carries the post-translational modification O-(pantetheine 4'-phosphoryl)serine. Positions 1700-1738 (NDLSRPSLVDDTSQALQSSGSESFDQPPTSVTSTSDSGS) are disordered. Residues 1709-1737 (DDTSQALQSSGSESFDQPPTSVTSTSDSG) are compositionally biased toward polar residues. A thioesterase (TE) domain region spans residues 1778-1882 (TGTIATYIHL…PRSKTVEDKN (105 aa)). The For thioesterase activity role is filled by histidine 2021.

The protein operates within mycotoxin biosynthesis. Functionally, non-reducing polyketide synthase; part of the gene cluster that mediates the biosynthesis of zearalenone (ZEA), a nonsteroid estrogen that is a contaminant of cereal grains and causes estrogenic disorders in humans and animals. The ZEA backbone is synthesized from a single acetyl-CoA molecule and eight malonyl-CoA molecules. The reducing polyketide synthase ZEA2 is proposed to synthesize a reduced hexaketide intermediate by using different combinations of its reductive domains during each round of condensation. The hexaketide thioester is then transacylated to the non-reducing polyketide synthase ZEA1 and is further condensed with three malonyl-CoAs without reductive tailoring to yield a mixed reduced/unreduced nonaketide. ZEA1 must be able to interact with ZEA2 to facilitate starter-unit acyltransfer and initiate polyketide biosynthesis. ZEA1 also mediates the required C2-C7 cyclization to form the resorcylate core and catalyzes the formation of the macrolactone. ZEA1 exhibits broad starter-unit specificities toward fatty acyl-CoAs ranging in sizes between C6 and C16 and displays the highest activity toward decanoyl-CoA. ZEB1 is then responsible for the chemical conversion of beta-zearalenonol (beta-ZOL) to ZEA in the biosynthetic pathway. The sequence is that of Non-reducing polyketide synthase ZEA1 from Gibberella zeae (strain ATCC MYA-4620 / CBS 123657 / FGSC 9075 / NRRL 31084 / PH-1) (Wheat head blight fungus).